The following is a 320-amino-acid chain: Coproporphyrin III ferrochelatase (320 aa).

Fe(2+) is bound by residues H194 and E273.

This sequence belongs to the ferrochelatase family.

Its subcellular location is the cytoplasm. It carries out the reaction Fe-coproporphyrin III + 2 H(+) = coproporphyrin III + Fe(2+). It participates in porphyrin-containing compound metabolism; protoheme biosynthesis. Involved in coproporphyrin-dependent heme b biosynthesis. Catalyzes the insertion of ferrous iron into coproporphyrin III to form Fe-coproporphyrin III. The chain is Coproporphyrin III ferrochelatase from Symbiobacterium thermophilum (strain DSM 24528 / JCM 14929 / IAM 14863 / T).